Consider the following 415-residue polypeptide: uncharacterized protein (415 aa).

Positions 85, 91, 94, and 175 each coordinate [4Fe-4S] cluster. 4 residues coordinate S-adenosyl-L-methionine: Q248, Y276, E297, and N344. C371 serves as the catalytic Nucleophile.

Belongs to the class I-like SAM-binding methyltransferase superfamily. RNA M5U methyltransferase family.

This is an uncharacterized protein from Leptospira interrogans serogroup Icterohaemorrhagiae serovar copenhageni (strain Fiocruz L1-130).